A 325-amino-acid polypeptide reads, in one-letter code: Aldo-keto reductase family 1 member A1 (325 aa).

At A2 the chain carries N-acetylalanine. S4 carries the phosphoserine modification. NADP(+) contacts are provided by residues 11–20, T21, and W22; that span reads GQKMPLIGLG. S38 carries the post-translational modification Phosphoserine. D45 serves as a coordination point for NADP(+). The active-site Proton donor is Y50. K127 bears the N6-acetyllysine; alternate mark. The residue at position 127 (K127) is an N6-succinyllysine; alternate. K145 is subject to N6-succinyllysine. NADP(+)-binding residues include S162, N163, S211, L213, S215, S216, K263, S264, I265, T266, R269, Q272, and N273. S211 is subject to Phosphoserine.

Belongs to the aldo/keto reductase family. Monomer. In terms of tissue distribution, widely expressed. Highly expressed in kidney, salivary gland and liver. Detected in trachea, stomach, brain, lung, prostate, placenta, mammary gland, small intestine and lung.

It localises to the cytoplasm. The protein localises to the cytosol. The protein resides in the apical cell membrane. It carries out the reaction a primary alcohol + NADP(+) = an aldehyde + NADPH + H(+). It catalyses the reaction allyl alcohol + NADP(+) = acrolein + NADPH + H(+). The enzyme catalyses glycerol + NADP(+) = D-glyceraldehyde + NADPH + H(+). The catalysed reaction is glycerol + NADP(+) = L-glyceraldehyde + NADPH + H(+). It carries out the reaction hydroxyacetone + NADP(+) = methylglyoxal + NADPH + H(+). It catalyses the reaction a 4-hydroxynonen-1-ol + NADP(+) = a 4-hydroxynonenal + NADPH + H(+). The enzyme catalyses 3-deoxyfructose + NADP(+) = 3-deoxyglucosone + NADPH + H(+). The catalysed reaction is L-gulonate + NADP(+) = aldehydo-D-glucuronate + NADPH + H(+). It carries out the reaction L-gulono-1,4-lactone + NADP(+) = D-glucurono-3,6-lactone + NADPH + H(+). It catalyses the reaction pyridine 3-methanol + NADP(+) = pyridine-3-carbaldehyde + NADPH + H(+). The enzyme catalyses S-nitroso-CoA + NADPH + H(+) = sulfinamide-CoA + NADP(+). The catalysed reaction is S-nitrosoglutathione + NADPH + H(+) = S-(hydroxysulfenamide)glutathione + NADP(+). Its function is as follows. Catalyzes the NADPH-dependent reduction of a wide variety of carbonyl-containing compounds to their corresponding alcohols. Displays enzymatic activity towards endogenous metabolites such as aromatic and aliphatic aldehydes, ketones, monosaccharides and bile acids, with a preference for negatively charged substrates, such as glucuronate and succinic semialdehyde. Functions as a detoxifiying enzyme by reducing a range of toxic aldehydes. Reduces methylglyoxal and 3-deoxyglucosone, which are present at elevated levels under hyperglycemic conditions and are cytotoxic. Involved also in the detoxification of lipid-derived aldehydes like acrolein. Plays a role in the activation of procarcinogens, such as polycyclic aromatic hydrocarbon trans-dihydrodiols, and in the metabolism of various xenobiotics and drugs, including the anthracyclines doxorubicin (DOX) and daunorubicin (DAUN). Also acts as an inhibitor of protein S-nitrosylation by mediating degradation of S-nitroso-coenzyme A (S-nitroso-CoA), a cofactor required to S-nitrosylate proteins. S-nitroso-CoA reductase activity is involved in reprogramming intermediary metabolism in renal proximal tubules, notably by inhibiting protein S-nitrosylation of isoform 2 of PKM (PKM2). Also acts as a S-nitroso-glutathione reductase by catalyzing the NADPH-dependent reduction of S-nitrosoglutathione. Displays no reductase activity towards retinoids. This chain is Aldo-keto reductase family 1 member A1 (AKR1A1), found in Homo sapiens (Human).